The chain runs to 372 residues: Putative isochorismate synthase MenF (372 aa).

The Proton acceptor role is filled by lysine 119. The active-site Proton donor is glutamate 175. The Mg(2+) site is built by glutamate 219 and glutamate 356.

This sequence belongs to the isochorismate synthase family. The cofactor is Mg(2+).

It catalyses the reaction chorismate = isochorismate. It functions in the pathway quinol/quinone metabolism; 1,4-dihydroxy-2-naphthoate biosynthesis; 1,4-dihydroxy-2-naphthoate from chorismate: step 1/7. Its pathway is quinol/quinone metabolism; menaquinone biosynthesis. In terms of biological role, catalyzes the conversion of chorismate to isochorismate. This chain is Putative isochorismate synthase MenF (menF), found in Mycobacterium tuberculosis (strain CDC 1551 / Oshkosh).